The following is a 222-amino-acid chain: MIF4G domain-containing protein B (222 aa).

The region spanning 3 to 205 (NSSKEDYKIQ…LEILEFRAGG (203 aa)) is the MIF4G domain.

It belongs to the MIF4GD family. As to quaternary structure, interacts with eif4g1, eif4g2 and slbp; probably tethered by SLBP to the 3'-end of mRNAs ending with the histone stem-loop, it also interacts with eif4g1 which is bound to their 5'-end.

The protein localises to the cytoplasm. Its subcellular location is the nucleus. Functions in replication-dependent translation of histone mRNAs which differ from other eukaryotic mRNAs in that they do not end with a poly-A tail but a stem-loop. May participate in circularizing those mRNAs specifically enhancing their translation. The sequence is that of MIF4G domain-containing protein B (mif4gdb) from Danio rerio (Zebrafish).